A 399-amino-acid chain; its full sequence is Glutathione S-transferase LANCL1 (399 aa).

The residue at position 2 (A2) is an N-acetylalanine. K142 is subject to N6-acetyllysine. C276 provides a ligand contact to Zn(2+). Residue K317 coordinates glutathione. Positions 322 and 323 each coordinate Zn(2+). Residue 364-367 participates in glutathione binding; that stretch reads RTAD.

Belongs to the LanC-like protein family. Interacts with the C-terminal of STOM. Interacts with the EPS8 SH3 domain. Interaction with EPS8 is inhibited by glutathione binding. As to expression, detected in spinal cord (at protein level). Ubiquitous. Strongly expressed in brain, testis, alveolar macrophages and epithelial cells of the lung, kidney and intestine. Expression in brain increases during the first postnatal month and remaining high in adult.

It is found in the cytoplasm. It localises to the cell membrane. The catalysed reaction is RX + glutathione = an S-substituted glutathione + a halide anion + H(+). It catalyses the reaction 1-chloro-2,4-dinitrobenzene + glutathione = 2,4-dinitrophenyl-S-glutathione + chloride + H(+). Functions as a glutathione transferase. Catalyzes conjugation of the glutathione (GSH) to artificial substrates 1-chloro-2,4-dinitrobenzene (CDNB) and p-nitrophenyl acetate. Mitigates neuronal oxidative stress during normal postnatal development and in response to oxidative stresses probably through GSH antioxidant defense mechanism. May play a role in EPS8 signaling. Binds glutathione. This chain is Glutathione S-transferase LANCL1, found in Mus musculus (Mouse).